Consider the following 274-residue polypeptide: Mitogen-activated protein kinase 4 (274 aa).

ATP is bound by residues 1–8 (GCGGNGLV) and K23. In terms of domain architecture, Protein kinase spans 1–274 (GCGGNGLVLS…KILTFSPMDR (274 aa)). D123 serves as the catalytic Proton acceptor. Residue S160 is modified to Phosphoserine. The SEG motif signature appears at 160 to 162 (SEG).

It belongs to the protein kinase superfamily. CMGC Ser/Thr protein kinase family. MAP kinase subfamily. As to quaternary structure, homodimer. Heterodimer with ERK3/MAPK6. Interacts with MAPKAPK5. The cofactor is Mg(2+). In terms of processing, phosphorylated by PAK1, PAK2 and PAK3 in the activation loop resulting in catalytic activation. Phosphorylated by MAPKAPK5 at other sites. As to expression, exclusively detected in the brain, where expression is restricted to the choroid plexus and hippocampus, and to a lesser extent in lung.

Its subcellular location is the cytoplasm. It is found in the nucleus. It carries out the reaction L-seryl-[protein] + ATP = O-phospho-L-seryl-[protein] + ADP + H(+). It catalyses the reaction L-threonyl-[protein] + ATP = O-phospho-L-threonyl-[protein] + ADP + H(+). Activated by phosphorylation in the activation loop. Atypical MAPK protein. Phosphorylates microtubule-associated protein 2 (MAP2) and MAPKAPK5. The precise role of the complex formed with MAPKAPK5 is still unclear, but the complex follows a complex set of phosphorylation events: upon interaction with atypical MAPKAPK5, ERK4/MAPK4 is phosphorylated and then mediates phosphorylation and activation of MAPKAPK5, which in turn phosphorylates ERK4/MAPK4. May promote entry in the cell cycle. This chain is Mitogen-activated protein kinase 4 (Mapk4), found in Rattus norvegicus (Rat).